We begin with the raw amino-acid sequence, 407 residues long: Tryptophan synthase beta chain (407 aa).

Lysine 98 is subject to N6-(pyridoxal phosphate)lysine.

The protein belongs to the TrpB family. As to quaternary structure, tetramer of two alpha and two beta chains. Requires pyridoxal 5'-phosphate as cofactor.

The enzyme catalyses (1S,2R)-1-C-(indol-3-yl)glycerol 3-phosphate + L-serine = D-glyceraldehyde 3-phosphate + L-tryptophan + H2O. Its pathway is amino-acid biosynthesis; L-tryptophan biosynthesis; L-tryptophan from chorismate: step 5/5. The beta subunit is responsible for the synthesis of L-tryptophan from indole and L-serine. The chain is Tryptophan synthase beta chain from Bradyrhizobium sp. (strain ORS 278).